Consider the following 454-residue polypeptide: Innexin-19 (454 aa).

The Cytoplasmic portion of the chain corresponds to 1-48 (MWRTPASTGPLRQDRQMFFHATLARSFINALSVRGDDDAVDRLNYYYT). The helical transmembrane segment at 49-69 (PLILAVCCLVISAKQYGGTPI) threads the bilayer. Over 70–118 (ECWVNPHSRESMEEYIESYCWIQNTYWIPMYENVPDDHTAREEKQIGYY) the chain is Extracellular. Residues 119–139 (QWVPFILIAEALMFSLPCIFW) form a helical membrane-spanning segment. Residues 140–214 (RLCSFQSGLN…SRFLSGQCLS (75 aa)) are Cytoplasmic-facing. A helical membrane pass occupies residues 215-235 (ILHSFTKLLYSMNVVAQFLIL). At 236–300 (NACLKSSDFL…ALLINIINEK (65 aa)) the chain is on the extracellular side. A helical transmembrane segment spans residues 301-321 (VFAFLWCWYMILAIITTCSFI). Residues 322 to 454 (YWIANSFIHS…SNPGQTKSFL (133 aa)) lie on the Cytoplasmic side of the membrane.

Belongs to the pannexin family. In terms of tissue distribution, specifically expressed in sensory neurons and interneurons in the head and tail. Expressed in neurons AWC, ASH, AFD, ASI, ADL, ASK, BAG, AWB, and ADF (head sensory neurons); ADA, AIZ, RIC, AIY, and AIM (head interneurons); PHA and PHB (tail sensory neurons); and PVC and PVQ (tail interneurons).

Its subcellular location is the cell membrane. It is found in the cell junction. The protein localises to the gap junction. Functionally, structural component of the gap junctions that specifically coordinates left-right asymmetry in the developing nervous system. Acts by forming gap junction network linking embryonic neurons and providing electrical coupling between cells, leading to promote or inhibit AWC signaling. Required for the left and right AWC olfactory neurons to establish asymmetric patterns of gene expression during embryogenesis. Acts autonomously. This is Innexin-19 (inx-19) from Caenorhabditis elegans.